The following is a 507-amino-acid chain: RNA-binding protein MEX3B (507 aa).

Residues 1–22 (MPSSLFADMERNGSGGGGGETL) are disordered. 2 KH domains span residues 59-120 (MTEC…RREI) and 155-216 (QTTI…REEI). Disordered regions lie at residues 256–279 (NQSS…LGSA) and 426–450 (SSSS…GMRR). Positions 426 to 446 (SSSSSSSSSSSSSSSSSSSSS) are enriched in low complexity. The RING-type zinc finger occupies 456-496 (CSICFESEVIAALVPCGHNLFCMECANRICEKNQPQCPVCH).

Its subcellular location is the cytoplasm. The protein localises to the nucleus. The protein resides in the cytoplasmic granule. It is found in the P-body. Functionally, RNA-binding protein. May be involved in post-transcriptional regulatory mechanisms. The sequence is that of RNA-binding protein MEX3B (mex3b) from Xenopus laevis (African clawed frog).